The following is a 430-amino-acid chain: MTSVVVVGTQWGDEGKGKITDFLSADAEVIARYQGGDNAGHTIVIDGKKFKLHLIPSGIFFPQKISVIGNGVVVNPKSLVKELAYLHDEGVTTDNLRISDRAHVILPYHIQLDQLQEDAKGDNKIGTTIKGIGPAYMDKAARVGIRIADLLDKDIFAERLRINLAEKNRLFEKMYDSTPLGFDAIFEEYYAYGQEIKQYVTDTSVILNDALDAGKRVLFEGAQGVMLDIDQGTYPFVTSSNPVAGGVTIGSGVGPSKINKVVGVCKAYTSRVGDGPFPTELFDEVGERIREVGHEYGTTTGRPRRVGWFDSVVMRHSRRVSGITNLSLNSIDVLSGLDTVKICVAYDLDGKRIDYYPASLEQLKRCKPIYEELPGWQEDITGVRSLDELPENARNYVRRVGELVGVRISTFSVGPGREQTNILESVWASI.

GTP contacts are provided by residues 12–18 and 40–42; these read GDEGKGK and GHT. D13 functions as the Proton acceptor in the catalytic mechanism. 2 residues coordinate Mg(2+): D13 and G40. IMP-binding positions include 13–16, 38–41, T128, R142, Q223, T238, and R302; these read DEGK and NAGH. Residue H41 is the Proton donor of the active site. 298–304 is a binding site for substrate; sequence TTTGRPR. Residues R304, 330-332, and 412-414 contribute to the GTP site; these read SID and SVG.

Belongs to the adenylosuccinate synthetase family. In terms of assembly, homodimer. It depends on Mg(2+) as a cofactor.

It localises to the cytoplasm. It catalyses the reaction IMP + L-aspartate + GTP = N(6)-(1,2-dicarboxyethyl)-AMP + GDP + phosphate + 2 H(+). It functions in the pathway purine metabolism; AMP biosynthesis via de novo pathway; AMP from IMP: step 1/2. In terms of biological role, plays an important role in the de novo pathway of purine nucleotide biosynthesis. Catalyzes the first committed step in the biosynthesis of AMP from IMP. The sequence is that of Adenylosuccinate synthetase from Streptococcus pyogenes serotype M12 (strain MGAS9429).